The sequence spans 473 residues: Dynein axonemal assembly factor 11 (473 aa).

LRR repeat units lie at residues 22–43 (SLEE…DKWC), 45–66 (DLKI…SKLK), 67–88 (KLEY…EGCE), and 89–110 (WLTK…KTLT). Positions 123–161 (NPCADFDGYRQFVVVTLQQLKWLDGKEIERSERIQALQN) constitute an LRRCT domain. Residues 153-205 (SERIQALQNYTSVEQQIREQEKAYCLRRAKEKEEAQRKLEEENESEDKKKSST) adopt a coiled-coil conformation. Composition is skewed to basic and acidic residues over residues 188–202 (QRKL…DKKK) and 273–283 (EKQRKAQDKLS). 3 disordered regions span residues 188–244 (QRKL…TKES), 273–292 (EKQR…AKPP), and 387–473 (VGEM…PPLI). In terms of domain architecture, CS spans 305–402 (VNEAKLDFSL…GGQRTPTSVK (98 aa)). The segment covering 397–408 (TPTSVKTTSTSS) has biased composition (low complexity). Over residues 417-431 (KQIERLEVDPSKHSC) the composition is skewed to basic and acidic residues. Residues 456-467 (PSEEDPDFEDNP) show a composition bias toward acidic residues.

Belongs to the tilB family. In terms of assembly, interacts (via CS domain) with ZMYND10 (via C-terminus). Mainly expressed in cells with motile cilia. Expressed in epithelial cells of the trachea, testis and ependymal cells of the cerebral ventricles. In testis, abundant expression in late prophase of meiosis I with a dramatic decrease after the first meiotic division (at protein level).

Its subcellular location is the cytoplasm. The protein resides in the cell projection. It localises to the cilium. It is found in the dynein axonemal particle. The protein localises to the flagellum. Its function is as follows. Involved in dynein arm assembly, is important for expression and transporting outer dynein arm (ODA) proteins from the cytoplasm to the cilia. Acts as a crucial component in the formation and motility of spermatozoal flagella. This chain is Dynein axonemal assembly factor 11 (Dnaaf11), found in Mus musculus (Mouse).